The primary structure comprises 282 residues: Exo-glucosaminidase LytG (282 aa).

Residues 1-29 form the signal peptide; sequence MARKKLKKRKLLISLFFLVSIPLALFVLA. One can recognise a GW domain in the interval 203-281; sequence SLKSVDLNAS…DDSAVEIKEA (79 aa).

The protein belongs to the glycosyl hydrolase 73 family. Mg(2+) is required as a cofactor.

The protein localises to the secreted. It is found in the cell wall. Inhibited by EDTA. Is the major glucosaminidase responsible for peptidoglycan structural determination during vegetative growth. Catalyzes the hydrolysis of 1,4-beta-linkages between N-acetyl-D-glucosamine and N-acetylmuramic acid residues in peptidoglycan. Acts processively from the ends of the glycan strands. Also plays a role in motility, chemotaxis and cell division. This Bacillus subtilis (strain 168) protein is Exo-glucosaminidase LytG (lytG).